The primary structure comprises 841 residues: Formin-like protein 10 (841 aa).

Residues 1–25 form the signal peptide; the sequence is MDGLCYVIFIIFSLLSCAFSPLSYA. A helical transmembrane segment spans residues 102 to 122; sequence LIPAISAVLAAATLIALAFFF. 3 disordered regions span residues 137–166, 254–297, and 403–512; these read SKSLASDISQSQQQTLPCPPPRNNNTQNKL, ISSH…RTVR, and KSSW…SKQR. Positions 139-152 are enriched in polar residues; sequence SLASDISQSQQQTL. The segment covering 254–278 has biased composition (low complexity); the sequence is ISSHSDSPAMSPSAAMSPPMNSTAP. Residues 279–293 are compositionally biased toward polar residues; sequence HWSTNQNTHSPSSPE. Over residues 426-444 the composition is skewed to pro residues; the sequence is LPPPQRPPPAMPEPPPLVP. The region spanning 469–841 is the FH2 domain; that stretch reads EGTTDRPKPK…KKMEVTSSLA (373 aa). Residues 502–512 show a composition bias toward polar residues; it reads YNSSNANSKQR.

Belongs to the formin-like family. Class-I subfamily.

It localises to the membrane. Might be involved in the organization and polarity of the actin cytoskeleton. This is Formin-like protein 10 (FH10) from Arabidopsis thaliana (Mouse-ear cress).